The following is a 462-amino-acid chain: Putative F-box protein At1g12855 (462 aa).

Residues 1–22 (MESREDSFISKEKKSTMKKEKQ) are compositionally biased toward basic and acidic residues. The disordered stretch occupies residues 1–59 (MESREDSFISKEKKSTMKKEKQAIASQRNRRRVIKNRGNGKRLIASLSQRKRRRIPRGR). Positions 28 to 40 (RNRRRVIKNRGNG) are enriched in basic residues. Positions 65-110 (VFAPSSLPNDVVEEIFLRLPVKAIIQLKSLSKQWRSTIESRSFEER) constitute an F-box domain.

This is Putative F-box protein At1g12855 from Arabidopsis thaliana (Mouse-ear cress).